We begin with the raw amino-acid sequence, 67 residues long: Large ribosomal subunit protein uL29 (67 aa).

The protein belongs to the universal ribosomal protein uL29 family.

The chain is Large ribosomal subunit protein uL29 from Methanosarcina acetivorans (strain ATCC 35395 / DSM 2834 / JCM 12185 / C2A).